Reading from the N-terminus, the 100-residue chain is Protamine-2 (100 aa).

The tract at residues 1-45 (MVRYHVRSPSERPHREYRQLVNGQEQGRHGQEEQGMSAEGVEGYG) is disordered. Ser8, Ser10, and Ser37 each carry phosphoserine. Basic and acidic residues predominate over residues 8 to 18 (SPSERPHREYR).

It belongs to the protamine P2 family. Interacts with TDRP. Post-translationally, proteolytic processing into mature chains is required for histone eviction during spermatogenesis. Transition proteins (TNP1 and TNP2) are required for processing. In terms of tissue distribution, testis.

The protein resides in the nucleus. It localises to the chromosome. In terms of biological role, protamines substitute for histones in the chromatin of sperm during the haploid phase of spermatogenesis. They compact sperm DNA into a highly condensed, stable and inactive complex. The polypeptide is Protamine-2 (PRM2) (Alouatta seniculus (Red howler monkey)).